The following is a 220-amino-acid chain: Ribose-5-phosphate isomerase A (220 aa).

Residues 28–31, 81–84, and 94–97 contribute to the substrate site; these read TGST, DGAD, and KGGG. Residue E103 is the Proton acceptor of the active site. Position 121 (K121) interacts with substrate.

It belongs to the ribose 5-phosphate isomerase family. As to quaternary structure, homodimer.

It catalyses the reaction aldehydo-D-ribose 5-phosphate = D-ribulose 5-phosphate. Its pathway is carbohydrate degradation; pentose phosphate pathway; D-ribose 5-phosphate from D-ribulose 5-phosphate (non-oxidative stage): step 1/1. Functionally, catalyzes the reversible conversion of ribose-5-phosphate to ribulose 5-phosphate. This chain is Ribose-5-phosphate isomerase A, found in Vesicomyosocius okutanii subsp. Calyptogena okutanii (strain HA).